A 78-amino-acid chain; its full sequence is Protein M6 (78 aa).

It belongs to the A9/FIL1 family. Tapetum of anthers.

Its subcellular location is the secreted. The chain is Protein M6 (M6) from Lilium henryi (Henry's lily).